The chain runs to 119 residues: Large ribosomal subunit protein bL20 (119 aa).

It belongs to the bacterial ribosomal protein bL20 family.

Functionally, binds directly to 23S ribosomal RNA and is necessary for the in vitro assembly process of the 50S ribosomal subunit. It is not involved in the protein synthesizing functions of that subunit. The chain is Large ribosomal subunit protein bL20 from Heliobacterium modesticaldum (strain ATCC 51547 / Ice1).